The sequence spans 186 residues: MASILRSPQALQLTLALIKPDAVAHPLILEAVHQQILSNKFLIVRMRELLWRKEDCQRFYREHEGRFFYQRLVEFMASGPIRAYILAHKDAIQLWRTLMGPTRVFRARHVAPDSIRGSFGLTDTRNTTHGSDSVVSASREIAAFFPDFSEQRWYEEEEPQLRCGPVCYSPEGGVHYVAGTGGLGPA.

6 residues coordinate ATP: lysine 19, phenylalanine 68, arginine 96, threonine 102, arginine 116, and asparagine 126. Histidine 129 functions as the Pros-phosphohistidine intermediate in the catalytic mechanism.

Belongs to the NDK family. Mg(2+) serves as cofactor. Expressed at a moderately low level in many tissues. Most abundant in kidney, prostate, ovary, intestine, and spleen.

The enzyme catalyses a 2'-deoxyribonucleoside 5'-diphosphate + ATP = a 2'-deoxyribonucleoside 5'-triphosphate + ADP. It catalyses the reaction a ribonucleoside 5'-diphosphate + ATP = a ribonucleoside 5'-triphosphate + ADP. Functionally, major role in the synthesis of nucleoside triphosphates other than ATP. The ATP gamma phosphate is transferred to the NDP beta phosphate via a ping-pong mechanism, using a phosphorylated active-site intermediate. Inhibitor of p53-induced apoptosis. The polypeptide is Nucleoside diphosphate kinase 6 (NME6) (Homo sapiens (Human)).